A 120-amino-acid polypeptide reads, in one-letter code: Large ribosomal subunit protein uL18 (120 aa).

A compositionally biased stretch (basic and acidic residues) spans 1–10; the sequence is MKLTRRESKE. The tract at residues 1 to 26 is disordered; it reads MKLTRRESKERRHRRVRGKVQGSPER.

Belongs to the universal ribosomal protein uL18 family. Part of the 50S ribosomal subunit; part of the 5S rRNA/L5/L18/L25 subcomplex. Contacts the 5S and 23S rRNAs.

Its function is as follows. This is one of the proteins that bind and probably mediate the attachment of the 5S RNA into the large ribosomal subunit, where it forms part of the central protuberance. The sequence is that of Large ribosomal subunit protein uL18 from Nostoc sp. (strain PCC 7120 / SAG 25.82 / UTEX 2576).